The chain runs to 1356 residues: Probable aldehyde oxidase 3 (1356 aa).

The 2Fe-2S ferredoxin-type domain maps to arginine 10–isoleucine 97. Cysteine 49, cysteine 54, cysteine 57, and cysteine 79 together coordinate [2Fe-2S] cluster. The FAD-binding PCMH-type domain maps to valine 245 to arginine 437. The disordered stretch occupies residues asparagine 552–serine 576.

The protein belongs to the xanthine dehydrogenase family. In terms of assembly, aldehyde oxidases (AO) are homodimers and heterodimers of AO subunits. [2Fe-2S] cluster is required as a cofactor. Requires FAD as cofactor. It depends on Mo-molybdopterin as a cofactor.

It catalyses the reaction an aldehyde + O2 + H2O = a carboxylate + H2O2 + H(+). This is Probable aldehyde oxidase 3 from Oryza sativa subsp. japonica (Rice).